A 394-amino-acid chain; its full sequence is MALQSLFLILLAGAAQLAQAHPKIFEQSRANAVETFDDAFPGDGETQADSVFSGIATFGRLPYWKCLNDKSQSFDIAFLGAPFDTGTSYRPGARFGPSGIREGSRRLNLYGGYNVPMETNPFNNWAKIVDCGDIPLTSYDNAVAIKQIENGHFELLTRKPTSYSEKDGYALDGSVLPRVITLGGDHTIVLPILRSVSRAYGPVSIIHFDSHLDSWKPKVFGGGKSSVGSINHGTYFYHASQEGLVSNDSNIHAGIRTTLSGLSDYDNDADCGFEIIEAREIDTIGIDAIIKRIRDRVGDGIAYLSIDIDVLDPAYAPATGTPESAGWTTRELRTILRGLDGIKLVGADIVEVAPAYDFAEVTTLAAADILFEVMSIMVKTPVYKEQAKQQSRFY.

A signal peptide spans 1 to 20; it reads MALQSLFLILLAGAAQLAQA. Residues His-186, Asp-209, His-211, Asp-213, Asp-307, and Asp-309 each coordinate Mn(2+).

The protein belongs to the arginase family. It depends on Mn(2+) as a cofactor.

The catalysed reaction is agmatine + H2O = urea + putrescine. This chain is Putative agmatinase 1, found in Schizosaccharomyces pombe (strain 972 / ATCC 24843) (Fission yeast).